The chain runs to 296 residues: Ribosomal RNA small subunit methyltransferase A (296 aa).

Positions 32, 34, 59, 80, 105, and 130 each coordinate S-adenosyl-L-methionine.

This sequence belongs to the class I-like SAM-binding methyltransferase superfamily. rRNA adenine N(6)-methyltransferase family. RsmA subfamily.

Its subcellular location is the cytoplasm. It carries out the reaction adenosine(1518)/adenosine(1519) in 16S rRNA + 4 S-adenosyl-L-methionine = N(6)-dimethyladenosine(1518)/N(6)-dimethyladenosine(1519) in 16S rRNA + 4 S-adenosyl-L-homocysteine + 4 H(+). In terms of biological role, specifically dimethylates two adjacent adenosines (A1518 and A1519) in the loop of a conserved hairpin near the 3'-end of 16S rRNA in the 30S particle. May play a critical role in biogenesis of 30S subunits. This Ligilactobacillus salivarius (strain UCC118) (Lactobacillus salivarius) protein is Ribosomal RNA small subunit methyltransferase A.